A 362-amino-acid polypeptide reads, in one-letter code: 3-dehydroquinate synthase (362 aa).

NAD(+)-binding positions include 74–79, 108–112, 132–133, lysine 145, and lysine 154; these read DGEEHK, GVTGD, and TT. 3 residues coordinate Zn(2+): glutamate 187, histidine 250, and histidine 267.

The protein belongs to the sugar phosphate cyclases superfamily. Dehydroquinate synthase family. Co(2+) is required as a cofactor. Zn(2+) serves as cofactor. It depends on NAD(+) as a cofactor.

The protein resides in the cytoplasm. It catalyses the reaction 7-phospho-2-dehydro-3-deoxy-D-arabino-heptonate = 3-dehydroquinate + phosphate. The protein operates within metabolic intermediate biosynthesis; chorismate biosynthesis; chorismate from D-erythrose 4-phosphate and phosphoenolpyruvate: step 2/7. Its function is as follows. Catalyzes the conversion of 3-deoxy-D-arabino-heptulosonate 7-phosphate (DAHP) to dehydroquinate (DHQ). The chain is 3-dehydroquinate synthase from Syntrophotalea carbinolica (strain DSM 2380 / NBRC 103641 / GraBd1) (Pelobacter carbinolicus).